The chain runs to 96 residues: UPF0166 protein aq_448 (96 aa).

It belongs to the UPF0166 family.

The chain is UPF0166 protein aq_448 from Aquifex aeolicus (strain VF5).